The chain runs to 242 residues: UPF0246 protein SP70585_1589 (242 aa).

This sequence belongs to the UPF0246 family.

The protein is UPF0246 protein SP70585_1589 of Streptococcus pneumoniae (strain 70585).